The sequence spans 273 residues: Putative expansin-B2 (273 aa).

The first 29 residues, 1–29 (MTILVVDRYYMLMNLLFALTCLLLNLTHC), serve as a signal peptide directing secretion. Asparagine 36 carries N-linked (GlcNAc...) asparagine glycosylation. Residues 65-173 (GGACGYGNAV…KKVECNYIGK (109 aa)) form the Expansin-like EG45 domain. Disulfide bonds link cysteine 68–cysteine 97, cysteine 100–cysteine 168, and cysteine 105–cysteine 111. The region spanning 186–269 (NSFAVLVAYV…NWQPGAIYKS (84 aa)) is the Expansin-like CBD domain.

It belongs to the expansin family. Expansin B subfamily.

The protein resides in the secreted. It is found in the cell wall. Its subcellular location is the membrane. May cause loosening and extension of plant cell walls by disrupting non-covalent bonding between cellulose microfibrils and matrix glucans. No enzymatic activity has been found. This chain is Putative expansin-B2 (EXPB2), found in Arabidopsis thaliana (Mouse-ear cress).